The following is an 80-amino-acid chain: Transcription elongation factor 1 homolog (80 aa).

Residues cysteine 25, cysteine 28, cysteine 49, and cysteine 52 each coordinate Zn(2+).

Belongs to the ELOF1 family.

It is found in the nucleus. Its function is as follows. Transcription elongation factor implicated in the maintenance of proper chromatin structure in actively transcribed regions. This is Transcription elongation factor 1 homolog from Encephalitozoon cuniculi (strain GB-M1) (Microsporidian parasite).